Here is a 260-residue protein sequence, read N- to C-terminus: Carbonic anhydrase 2 (260 aa).

Positions 3–259 (HHWGYDSHNG…LKSREVRASF (257 aa)) constitute an Alpha-carbonic anhydrase domain. The active-site Proton donor/acceptor is the histidine 64. Zn(2+) is bound by residues histidine 94, histidine 96, and histidine 119. Residue 198-199 (TT) coordinates substrate.

Belongs to the alpha-carbonic anhydrase family. The cofactor is Zn(2+).

The protein resides in the cytoplasm. It localises to the cell membrane. The catalysed reaction is hydrogencarbonate + H(+) = CO2 + H2O. The enzyme catalyses urea = cyanamide + H2O. With respect to regulation, inhibited by acetazolamide. Its function is as follows. Catalyzes the reversible hydration of carbon dioxide. Can also hydrate cyanamide to urea. This is Carbonic anhydrase 2 (CA2) from Gallus gallus (Chicken).